The sequence spans 758 residues: MAVSARSARSPPDSDKVQKDKAGQTSGRRQGSRMGKLLGFEWTDVSSWGKLVTLLNRPTDPASLAVFRFLFGLMMVLDIPQERGLSSLDRRYLDGLEVCRFPLLDALQPLPLDWMYLVYTIMFLGALGMMLGLRYRISCVLFLLPYWYVFLLDKTSWNNHSYLYGLLAFQLTFMDANRYWSVDGLLSARKRNAHVPLWNYAVLRGQIFIVYFIAGVKKLDADWVEGYSMEYLSRHWLFSPFKFVLSEEMTSLLVVHWCGLLLDLSAGFLLFFDASRSIGLLFVSYFHCMNSQLFSIGMFPYVMLASSPLFCSPEWPRKLVAHCPKRLQELLPLRTAPQPSASCVYKRSRAKGGQKPGLRHRLGAAFTLLYLLEQLFLPYSHFLTQGYNNWTNGLYGYSWDMMVHSRSHQHVKITYRDGRTGELGYLNPGVFTQSRRWKDHADMLKQYATCLSRLLPKYNVTEPQIYFDIWVSINDRFQQRIFDPRVDIVQATWSPFQRTPWLQPLLMDLSPWRTKLQEIKSSLDNHTEVVFIADFPGLHLENFVSEDLGNTSIQLLQGEVTVELVAEQKNQTLQEGEKMQLPAGEYHKVYTMSPSPSCYMYIYVNTTELALEQDLAYLQELKEKVENGSETEPLPPELQPLLEGEVKGGPEPTPLVQTFLRRQQRLQEIERRRNAPFHERLLRFLLRKLYVFRRSFLMTCISLRNLVLGRPSLEQLAQEVTYANLRPFEPVGEPSPSNTDSSNPNPSEPNADAVHSEF.

A disordered region spans residues 1–31 (MAVSARSARSPPDSDKVQKDKAGQTSGRRQG). An N-acetylalanine modification is found at Ala2. Topologically, residues 2 to 60 (AVSARSARSPPDSDKVQKDKAGQTSGRRQGSRMGKLLGFEWTDVSSWGKLVTLLNRPTD) are cytoplasmic. Over residues 12–22 (PDSDKVQKDKA) the composition is skewed to basic and acidic residues. Residues 61-81 (PASLAVFRFLFGLMMVLDIPQ) traverse the membrane as a helical segment. The Lumenal portion of the chain corresponds to 82 to 113 (ERGLSSLDRRYLDGLEVCRFPLLDALQPLPLD). A disulfide bridge connects residues Cys99 and Cys450. The helical transmembrane segment at 114–134 (WMYLVYTIMFLGALGMMLGLR) threads the bilayer. Residues 135 to 136 (YR) are Cytoplasmic-facing. The helical transmembrane segment at 137-157 (ISCVLFLLPYWYVFLLDKTSW) threads the bilayer. Residues 158–292 (NNHSYLYGLL…VSYFHCMNSQ (135 aa)) are Lumenal-facing. A helical transmembrane segment spans residues 293–313 (LFSIGMFPYVMLASSPLFCSP). The Cytoplasmic portion of the chain corresponds to 314 to 361 (EWPRKLVAHCPKRLQELLPLRTAPQPSASCVYKRSRAKGGQKPGLRHR). Residues 362–382 (LGAAFTLLYLLEQLFLPYSHF) form a helical membrane-spanning segment. Over 383–758 (LTQGYNNWTN…PNADAVHSEF (376 aa)) the chain is Lumenal. The disordered stretch occupies residues 727–758 (PFEPVGEPSPSNTDSSNPNPSEPNADAVHSEF). Low complexity predominate over residues 734 to 750 (PSPSNTDSSNPNPSEPN).

It belongs to the vitamin K-dependent gamma-carboxylase family. In terms of assembly, monomer. May interact with CALU.

It localises to the endoplasmic reticulum membrane. The enzyme catalyses 4-carboxy-L-glutamyl-[protein] + 2,3-epoxyphylloquinone + H2O + H(+) = phylloquinol + L-glutamyl-[protein] + CO2 + O2. Mediates the vitamin K-dependent carboxylation of glutamate residues to calcium-binding gamma-carboxyglutamate (Gla) residues with the concomitant conversion of the reduced hydroquinone form of vitamin K to vitamin K epoxide. Catalyzes gamma-carboxylation of various proteins, such as blood coagulation factors (F2, F7, F9 and F10), osteocalcin (BGLAP) or matrix Gla protein (MGP). The protein is Vitamin K-dependent gamma-carboxylase (GGCX) of Delphinapterus leucas (Beluga whale).